Here is a 1940-residue protein sequence, read N- to C-terminus: Protein ORF1940 (1940 aa).

4 TPR repeats span residues 119 to 153, 155 to 186, 480 to 513, and 617 to 652; these read IKAC…ALQY, FQSL…LQQI, RLPD…GLHG, and GKSM…SPTS. Disordered regions lie at residues 1160–1239 and 1519–1571; these read PSKV…PGAV and KGPS…TVTS. The segment covering 1164–1185 has biased composition (low complexity); sequence QNTTQPSATQNTTTQPTAQNTS. Residues 1186–1200 show a composition bias toward polar residues; sequence LPGATQNTTLPTPSK. Low complexity-rich tracts occupy residues 1201–1235, 1521–1539, and 1561–1571; these read VQNT…NTSL, PSTT…MTPP, and TPGSGSQTVTS. The TPR 5 repeat unit spans residues 1691-1724; sequence KDLNKSVGTSVVEEAKYNSTLQTYLAGLGIKDLN. Positions 1862–1940 are disordered; that stretch reads TTTHHITPPP…AEQAEQVLLI (79 aa). Residues 1868–1883 are compositionally biased toward pro residues; that stretch reads TPPPPPPPPPPPPPPK. The segment covering 1884-1894 has biased composition (low complexity); it reads TQTITTTTQIT. Pro residues predominate over residues 1895 to 1912; the sequence is PPSPPPTPPPPPPPPKSP.

This chain is Protein ORF1940, found in Acidianus convivator (ATV).